A 431-amino-acid polypeptide reads, in one-letter code: MSKIVKVIGREIIDSRGNPTVEAEVHLEGGFVGLAAAPSGASTGSREALELRDGDKSRFLGKGVTKAVAAVNGPIAQAVLGKDAKDQANIDKIMIDLDGTENKSQFGANAILAVSLAAAKAAAASKGLPLYAHIAELNGTPGKYSMPLPMMNIINGGEHADNNVDIQEFMIQPVGAKTLKEAIRMGSEVFHTLAKVLKSKGMGTAVGDEGGYAPNLGSNAEALAVIAEAVKAAGYELGKDITLAMDCAASEFYKDGKYVLAGEGNKSFTSEEFTHFLEDLTKQYPIVSIEDGLDESDWAGFAYQTKVLGDKIQLVGDDLFVTNTKILKEGIDKGIANSILIKFNQIGSLTETLAAIKMAKDAGYTAVISHRSGETEDATIADLAVGTAAGQIKTGSMSRSDRVAKYNQLIRIEEALGDSAPFNGLKEVKGQ.

(2R)-2-phosphoglycerate is bound at residue glutamine 167. Glutamate 209 serves as the catalytic Proton donor. Aspartate 246, glutamate 290, and aspartate 317 together coordinate Mg(2+). (2R)-2-phosphoglycerate is bound by residues lysine 342, arginine 371, serine 372, and lysine 393. Lysine 342 serves as the catalytic Proton acceptor.

Belongs to the enolase family. Component of the RNA degradosome, a multiprotein complex involved in RNA processing and mRNA degradation. Mg(2+) is required as a cofactor.

It is found in the cytoplasm. The protein localises to the secreted. The protein resides in the cell surface. The catalysed reaction is (2R)-2-phosphoglycerate = phosphoenolpyruvate + H2O. The protein operates within carbohydrate degradation; glycolysis; pyruvate from D-glyceraldehyde 3-phosphate: step 4/5. Catalyzes the reversible conversion of 2-phosphoglycerate (2-PG) into phosphoenolpyruvate (PEP). It is essential for the degradation of carbohydrates via glycolysis. In Pectobacterium atrosepticum (strain SCRI 1043 / ATCC BAA-672) (Erwinia carotovora subsp. atroseptica), this protein is Enolase.